We begin with the raw amino-acid sequence, 778 residues long: Beta-phellandrene synthase (neryl-diphosphate-cyclizing), chloroplastic (778 aa).

A chloroplast-targeting transit peptide spans 1–36; it reads MIVGYRSTIITLSHPKLGNGKTISSNAIFQRSCRVR. Asp531, Asn676, and Glu684 together coordinate Mg(2+). Residues 531–535 carry the DDXXD motif motif; that stretch reads DDHFE.

Belongs to the terpene synthase family. Tpse subfamily. The cofactor is Mg(2+). As to expression, trichomes.

Its subcellular location is the plastid. The protein localises to the chloroplast. It carries out the reaction neryl diphosphate = beta-phellandrene + diphosphate. In terms of biological role, monoterpene synthase catalyzing the production of beta-phellandrene from neryl diphosphate. Also produces lower amounts of delta-2-carene, alpha-phellandrene and limonene. When incubated in vitro with geranyl diphosphate, catalyzes the formation of acyclic myrcene and ocimene as major products in addition to beta-phellandrene. This Solanum lycopersicum (Tomato) protein is Beta-phellandrene synthase (neryl-diphosphate-cyclizing), chloroplastic (PHS1).